A 78-amino-acid polypeptide reads, in one-letter code: Large ribosomal subunit protein bL28 (78 aa).

A disordered region spans residues 1 to 21 (MSRVCQVTGKRPVSGNNRSHA).

Belongs to the bacterial ribosomal protein bL28 family.

This is Large ribosomal subunit protein bL28 from Yersinia enterocolitica serotype O:8 / biotype 1B (strain NCTC 13174 / 8081).